Reading from the N-terminus, the 222-residue chain is ATP-dependent dethiobiotin synthetase BioD (222 aa).

Residue D12 to I17 coordinates ATP. T16 is a binding site for Mg(2+). Residue K37 is part of the active site. Substrate is bound at residue T41. ATP is bound by residues D49, E107–G110, G167–S168, and A197–G199. Mg(2+) contacts are provided by D49 and E107.

This sequence belongs to the dethiobiotin synthetase family. As to quaternary structure, homodimer. It depends on Mg(2+) as a cofactor.

The protein resides in the cytoplasm. The enzyme catalyses (7R,8S)-7,8-diammoniononanoate + CO2 + ATP = (4R,5S)-dethiobiotin + ADP + phosphate + 3 H(+). It functions in the pathway cofactor biosynthesis; biotin biosynthesis; biotin from 7,8-diaminononanoate: step 1/2. Functionally, catalyzes a mechanistically unusual reaction, the ATP-dependent insertion of CO2 between the N7 and N8 nitrogen atoms of 7,8-diaminopelargonic acid (DAPA, also called 7,8-diammoniononanoate) to form a ureido ring. In Corynebacterium diphtheriae (strain ATCC 700971 / NCTC 13129 / Biotype gravis), this protein is ATP-dependent dethiobiotin synthetase BioD.